Reading from the N-terminus, the 166-residue chain is Flagellar assembly factor FliW (166 aa).

Belongs to the FliW family. In terms of assembly, interacts with translational regulator CsrA and flagellin(s).

Its subcellular location is the cytoplasm. Acts as an anti-CsrA protein, binds CsrA and prevents it from repressing translation of its target genes, one of which is flagellin. Binds to flagellin and participates in the assembly of the flagellum. The polypeptide is Flagellar assembly factor FliW (Desulfovibrio desulfuricans (strain ATCC 27774 / DSM 6949 / MB)).